A 1958-amino-acid chain; its full sequence is Echinoderm microtubule-associated protein-like 6 (1958 aa).

WD repeat units lie at residues 59 to 100 (GHND…TVSI), 104 to 145 (VHTH…LLAS), 148 to 187 (GHSDRIFDISWDPYQPNRMVSCGVKHIKFWTLCGNALTAK), 195 to 233 (GDLQTILCLACAKEDITYSGALNGDIYVWKGLTLVRTIQ), 235 to 273 (AHSAGIFSLYACEEGFATGGRDGCIRLWDTDFKPITKID), 280 to 321 (GYKG…LILQ), 323 to 362 (HCEGELWALALHPKKPLAVTGSDDRSVRLWSLADHALIAR), 364 to 403 (NMEEAVRSVSFSPDGSQLALGMKDGSFIVLRVRDMTEVVH), 406 to 445 (DRKEVIHEMKFSPDGSYLAVGSNDGPVDVYAVAQRYKKIG), and 561 to 601 (GHSA…VSNG). A disordered region spans residues 604 to 627 (ETTPQEGGADSYSEESDSDFSDVP). The span at 615–627 (YSEESDSDFSDVP) shows a compositional bias: acidic residues. 10 WD repeats span residues 725–766 (GHDD…CLSL), 770–811 (HHQR…KIAT), 814–853 (GHKDKIFVVKCNPQHADKLVTVGIKHIKFWQQAGGGFTSK), 861–900 (GKLETMMCVSYGRMEDLVFSGAATGDIFIWKDVLLLKTVK), 901–940 (AHDGPVFAMYALDKGFVTGGKDGIVELWDDMFERCLKTYA), 996–1035 (HMEGEVWGLAAHPLLPICATVSDDKTLRIWELSSQHRMLA), 1038–1077 (KLKKGGRCCAFSPDGKALAVGLNDGSFLVVNADTVEDMLS), 1080–1120 (HRKE…RVGI), 1191–1230 (SDVTDVNAANLTKDGSLLATGDDFGFVKLFSYPVKGQHAR), and 1236–1276 (GHSA…TQES). Positions 1322–1337 (KPHQQLKEVSMEERPP) are enriched in basic and acidic residues. The disordered stretch occupies residues 1322-1352 (KPHQQLKEVSMEERPPVSRAAPQPEKLQKNN). 10 WD repeats span residues 1412–1456 (EHTD…TLSM), 1460–1501 (FHTK…KVAS), 1504–1543 (GHLERIFVVEFRPDSDTQFVSVGVKHMKFWTLAGSALLYK), 1553–1591 (AKMQTMLSVAFGANNLTFTGAINGDVYVWKEHFLIRLVA), 1593–1638 (AHTG…CRAF), 1685–1724 (HMEGEIWGLATHPSKDMFISASNDGTARIWDLADKKLLNK), 1726–1767 (NLGH…GKKR), 1768–1807 (DRKSAIQDIRISPDNRFLAVGSSEQTVDFYDLTQGTSLNR), 1880–1919 (ADKADVNCACVTHAGLNIVTGDDFGLLKLFDFPCTEKFAK), and 1925–1958 (GHSAHVTNIRFSSDDKYVVSTGGDDCSVFVWRCL).

The protein belongs to the WD repeat EMAP family.

It localises to the cytoplasm. It is found in the cytoskeleton. Its function is as follows. May modify the assembly dynamics of microtubules, such that microtubules are slightly longer, but more dynamic. This is Echinoderm microtubule-associated protein-like 6 (Eml6) from Mus musculus (Mouse).